The following is a 359-amino-acid chain: Peptide chain release factor 1 (359 aa).

N5-methylglutamine is present on glutamine 233.

The protein belongs to the prokaryotic/mitochondrial release factor family. Post-translationally, methylated by PrmC. Methylation increases the termination efficiency of RF1.

It localises to the cytoplasm. Peptide chain release factor 1 directs the termination of translation in response to the peptide chain termination codons UAG and UAA. This chain is Peptide chain release factor 1, found in Ruminiclostridium cellulolyticum (strain ATCC 35319 / DSM 5812 / JCM 6584 / H10) (Clostridium cellulolyticum).